A 62-amino-acid chain; its full sequence is Large ribosomal subunit protein bL28 (62 aa).

Belongs to the bacterial ribosomal protein bL28 family.

This chain is Large ribosomal subunit protein bL28, found in Helicobacter acinonychis (strain Sheeba).